The following is a 124-amino-acid chain: Ribonuclease pancreatic (124 aa).

Positions 1–13 are enriched in basic and acidic residues; sequence KETAAAKFERQHM. The disordered stretch occupies residues 1–25; it reads KETAAAKFERQHMDSSTSSASSSNY. Substrate-binding residues include Lys-7 and Arg-10. The active-site Proton acceptor is the His-12. Cystine bridges form between Cys-26-Cys-84, Cys-40-Cys-95, Cys-58-Cys-110, and Cys-65-Cys-72. Residues 41–45, Lys-66, and Arg-85 each bind substrate; that span reads KPVNT. His-119 (proton donor) is an active-site residue.

Belongs to the pancreatic ribonuclease family. In terms of assembly, monomer. Interacts with and forms tight 1:1 complexes with RNH1. Dimerization of two such complexes may occur. Interaction with RNH1 inhibits this protein. Pancreas.

It is found in the secreted. The enzyme catalyses an [RNA] containing cytidine + H2O = an [RNA]-3'-cytidine-3'-phosphate + a 5'-hydroxy-ribonucleotide-3'-[RNA].. It carries out the reaction an [RNA] containing uridine + H2O = an [RNA]-3'-uridine-3'-phosphate + a 5'-hydroxy-ribonucleotide-3'-[RNA].. In terms of biological role, endonuclease that catalyzes the cleavage of RNA on the 3' side of pyrimidine nucleotides. Acts on single-stranded and double-stranded RNA. The chain is Ribonuclease pancreatic (RNASE1) from Tragelaphus oryx (Eland).